Consider the following 272-residue polypeptide: uncharacterized protein (272 aa).

This is an uncharacterized protein from Bacillus anthracis.